The sequence spans 130 residues: Capsid protein (130 aa).

The segment at 32–105 (EWISSNSRSQ…FATNSDCELI (74 aa)) is viral RNA-binding.

Belongs to the Leviviricetes capsid protein family. As to quaternary structure, homodimer. The capsid proteins form dimers that assemble by group of 5. Twelve such pentamers are linked together with free dimers. The homodimers binds to the viral RNA via an operator hairpin, but also to many other RNA sequences in the viral genome; this interaction probably shifts the virus from the replicative to the assembly phase and ensures specific encapsidation of the viral genome.

The protein resides in the virion. Capsid protein self-assembles to form an icosahedral capsid with a T=3 symmetry, about 26 nm in diameter, and consisting of 89 capsid proteins dimers (178 capsid proteins). Involved in viral genome encapsidation through the interaction between a capsid protein dimer and the multiple packaging signals present in the RNA genome. The capsid also contains 1 copy of the A2 maturation protein. In terms of biological role, acts as a translational repressor of viral replicase synthesis late in infection. This latter function is the result of capsid protein interaction with an RNA hairpin which contains the replicase ribosome-binding site. This chain is Capsid protein, found in Enterobacteria phage ZR (Bacteriophage ZR).